The following is a 439-amino-acid chain: Protein CNPPD1 (439 aa).

A helical membrane pass occupies residues 231-251 (CLLGVVYLTGFAAVFTSIAVV). The interval 283–302 (ALAPEQPQPKLPDVSPPSST) is disordered.

The protein belongs to the CNPPD1 family.

It localises to the membrane. The polypeptide is Protein CNPPD1 (CNPPD1) (Gallus gallus (Chicken)).